We begin with the raw amino-acid sequence, 200 residues long: MRCQVRLEIFYELNEQEQHMKHLLHRALRTHMLSIRQWGAHTKTRAEIRGGGRKPWKQKGTGRARAGSRRSPLWRGGGVAFGPRGVAMECKLNRKESRKATKIAFMACSKKIQIVNPPILEKPSSRTISQMLPPLPSRPVLWILHEKNPSLWLSCRNIKTLQLIQAEHIYVKPLLWAKQIWISHEAIPILENQLNVKMME.

The tract at residues 45–71 is disordered; the sequence is RAEIRGGGRKPWKQKGTGRARAGSRRS. The segment covering 51-68 has biased composition (basic residues); it reads GGRKPWKQKGTGRARAGS.

This sequence belongs to the universal ribosomal protein uL4 family. As to quaternary structure, part of the 50S ribosomal subunit.

Its subcellular location is the plastid. The protein resides in the chloroplast. Its function is as follows. Probably binds the 23S rRNA. This chain is Large ribosomal subunit protein uL4c (rpl4), found in Cyanidioschyzon merolae (strain NIES-3377 / 10D) (Unicellular red alga).